Here is a 628-residue protein sequence, read N- to C-terminus: Phosphomethylpyrimidine synthase (628 aa).

A compositionally biased stretch (polar residues) spans 1 to 14 (MTISDIGSQATTHT). The segment at 1–37 (MTISDIGSQATTHTPVKASKADALKTPAHRSETDARF) is disordered. Residues 19–37 (SKADALKTPAHRSETDARF) show a composition bias toward basic and acidic residues. Substrate contacts are provided by residues asparagine 260, methionine 289, tyrosine 318, histidine 354, 374–376 (SRG), 415–418 (DGLR), and glutamate 454. Histidine 458 lines the Zn(2+) pocket. Tyrosine 481 provides a ligand contact to substrate. Histidine 522 is a Zn(2+) binding site. Cysteine 602, cysteine 605, and cysteine 610 together coordinate [4Fe-4S] cluster.

Belongs to the ThiC family. In terms of assembly, homodimer. It depends on [4Fe-4S] cluster as a cofactor.

It carries out the reaction 5-amino-1-(5-phospho-beta-D-ribosyl)imidazole + S-adenosyl-L-methionine = 4-amino-2-methyl-5-(phosphooxymethyl)pyrimidine + CO + 5'-deoxyadenosine + formate + L-methionine + 3 H(+). The protein operates within cofactor biosynthesis; thiamine diphosphate biosynthesis. In terms of biological role, catalyzes the synthesis of the hydroxymethylpyrimidine phosphate (HMP-P) moiety of thiamine from aminoimidazole ribotide (AIR) in a radical S-adenosyl-L-methionine (SAM)-dependent reaction. The chain is Phosphomethylpyrimidine synthase from Psychrobacter cryohalolentis (strain ATCC BAA-1226 / DSM 17306 / VKM B-2378 / K5).